A 99-amino-acid chain; its full sequence is Aspartyl/glutamyl-tRNA(Asn/Gln) amidotransferase subunit C (99 aa).

Belongs to the GatC family. Heterotrimer of A, B and C subunits.

The enzyme catalyses L-glutamyl-tRNA(Gln) + L-glutamine + ATP + H2O = L-glutaminyl-tRNA(Gln) + L-glutamate + ADP + phosphate + H(+). It catalyses the reaction L-aspartyl-tRNA(Asn) + L-glutamine + ATP + H2O = L-asparaginyl-tRNA(Asn) + L-glutamate + ADP + phosphate + 2 H(+). In terms of biological role, allows the formation of correctly charged Asn-tRNA(Asn) or Gln-tRNA(Gln) through the transamidation of misacylated Asp-tRNA(Asn) or Glu-tRNA(Gln) in organisms which lack either or both of asparaginyl-tRNA or glutaminyl-tRNA synthetases. The reaction takes place in the presence of glutamine and ATP through an activated phospho-Asp-tRNA(Asn) or phospho-Glu-tRNA(Gln). In Burkholderia cenocepacia (strain ATCC BAA-245 / DSM 16553 / LMG 16656 / NCTC 13227 / J2315 / CF5610) (Burkholderia cepacia (strain J2315)), this protein is Aspartyl/glutamyl-tRNA(Asn/Gln) amidotransferase subunit C.